The following is a 498-amino-acid chain: Bifunctional protein GlmU (498 aa).

The tract at residues 1–238 is pyrophosphorylase; it reads MSDAAVVILA…PALVAGVNDR (238 aa). UDP-N-acetyl-alpha-D-glucosamine contacts are provided by residues 9 to 12, Lys23, Gln80, and 85 to 86; these read LAAG and GT. Residue Asp111 coordinates Mg(2+). Gly148, Glu163, Asn178, and Asn236 together coordinate UDP-N-acetyl-alpha-D-glucosamine. Asn236 is a binding site for Mg(2+). The segment at 239–259 is linker; the sequence is VQLADLGAELNRRVVAAHQRA. The tract at residues 260–498 is N-acetyltransferase; that stretch reads GVTIVDPATT…TAKPAPATGE (239 aa). UDP-N-acetyl-alpha-D-glucosamine-binding residues include Arg341 and Lys359. His371 functions as the Proton acceptor in the catalytic mechanism. UDP-N-acetyl-alpha-D-glucosamine contacts are provided by Tyr374 and Asn385. Residues Ala388, 394–395, Ser413, and Ala431 each bind acetyl-CoA; that span reads NY. The disordered stretch occupies residues 470-498; the sequence is AAEAAAADGDTAAADRAAATAKPAPATGE.

It in the N-terminal section; belongs to the N-acetylglucosamine-1-phosphate uridyltransferase family. In the C-terminal section; belongs to the transferase hexapeptide repeat family. In terms of assembly, homotrimer. It depends on Mg(2+) as a cofactor.

Its subcellular location is the cytoplasm. It catalyses the reaction alpha-D-glucosamine 1-phosphate + acetyl-CoA = N-acetyl-alpha-D-glucosamine 1-phosphate + CoA + H(+). It carries out the reaction N-acetyl-alpha-D-glucosamine 1-phosphate + UTP + H(+) = UDP-N-acetyl-alpha-D-glucosamine + diphosphate. It participates in nucleotide-sugar biosynthesis; UDP-N-acetyl-alpha-D-glucosamine biosynthesis; N-acetyl-alpha-D-glucosamine 1-phosphate from alpha-D-glucosamine 6-phosphate (route II): step 2/2. The protein operates within nucleotide-sugar biosynthesis; UDP-N-acetyl-alpha-D-glucosamine biosynthesis; UDP-N-acetyl-alpha-D-glucosamine from N-acetyl-alpha-D-glucosamine 1-phosphate: step 1/1. It functions in the pathway bacterial outer membrane biogenesis; LPS lipid A biosynthesis. In terms of biological role, catalyzes the last two sequential reactions in the de novo biosynthetic pathway for UDP-N-acetylglucosamine (UDP-GlcNAc). The C-terminal domain catalyzes the transfer of acetyl group from acetyl coenzyme A to glucosamine-1-phosphate (GlcN-1-P) to produce N-acetylglucosamine-1-phosphate (GlcNAc-1-P), which is converted into UDP-GlcNAc by the transfer of uridine 5-monophosphate (from uridine 5-triphosphate), a reaction catalyzed by the N-terminal domain. This chain is Bifunctional protein GlmU, found in Mycolicibacterium gilvum (strain PYR-GCK) (Mycobacterium gilvum (strain PYR-GCK)).